A 200-amino-acid polypeptide reads, in one-letter code: dTTP/UTP pyrophosphatase (200 aa).

The Proton acceptor role is filled by Asp-81.

Belongs to the Maf family. YhdE subfamily. The cofactor is a divalent metal cation.

It localises to the cytoplasm. The enzyme catalyses dTTP + H2O = dTMP + diphosphate + H(+). It catalyses the reaction UTP + H2O = UMP + diphosphate + H(+). In terms of biological role, nucleoside triphosphate pyrophosphatase that hydrolyzes dTTP and UTP. May have a dual role in cell division arrest and in preventing the incorporation of modified nucleotides into cellular nucleic acids. This Cupriavidus pinatubonensis (strain JMP 134 / LMG 1197) (Cupriavidus necator (strain JMP 134)) protein is dTTP/UTP pyrophosphatase.